A 253-amino-acid polypeptide reads, in one-letter code: Nurim homolog (253 aa).

Residues 1 to 2 (MA) are Nuclear-facing. A helical membrane pass occupies residues 3–30 (TFAKVMLLLSSVATFGYTFFVVGKLMLF). Over 31-56 (LSTPRSISKAHTWIFNLLDNKSRLET) the chain is Perinuclear space. The helical transmembrane segment at 57-78 (AYGPIVFDTLYLIGFIFQHSFL) threads the bilayer. Topologically, residues 79–96 (KSALVKNLWRKLGLAAAE) are nuclear. The chain crosses the membrane as a helical span at residues 97–113 (RTIYSLTSSICLHYLLK). Topologically, residues 114 to 132 (NWLPAQSIVLWQVDVDESA) are perinuclear space. Residues 133 to 161 (PLWWTFVVTHGLGWAVIFGGSLIMDLPEL) form a helical membrane-spanning segment. Residues 162–188 (LGVKQVYYDLKEYGEPVAYKSSELRNL) are Nuclear-facing. The helical transmembrane segment at 189 to 207 (YSHVRHPSFVGLSVILFAT) threads the bilayer. The Perinuclear space portion of the chain corresponds to 208–213 (NVMSLD). The chain crosses the membrane as a helical span at residues 214 to 231 (RLLLASLLTVYMYVAWST). Topologically, residues 232-253 (DDKDVAYQKQQLRNKKHELKAQ) are nuclear.

The protein belongs to the nurim family.

Its subcellular location is the nucleus inner membrane. The protein is Nurim homolog (nrm) of Drosophila pseudoobscura pseudoobscura (Fruit fly).